Reading from the N-terminus, the 148-residue chain is Ponticulin-like protein D (148 aa).

An N-terminal signal peptide occupies residues 1 to 20 (MLLNKSLLLLVAFVFAIVSA). N-linked (GlcNAc...) asparagine glycosylation is present at asparagine 67. Aspartate 125 carries the GPI-like-anchor amidated aspartate lipid modification. Positions 126–148 (SSAAATMIASFSAILIALLFALL) are cleaved as a propeptide — removed in mature form.

It belongs to the ponticulin family. Post-translationally, the GPI-like-anchor contains a phosphoceramide group, rather than a phosphatidyl group.

The protein resides in the cell membrane. In Dictyostelium discoideum (Social amoeba), this protein is Ponticulin-like protein D (ponD).